A 91-amino-acid polypeptide reads, in one-letter code: Small ribosomal subunit protein uS19 (91 aa).

Belongs to the universal ribosomal protein uS19 family.

In terms of biological role, protein S19 forms a complex with S13 that binds strongly to the 16S ribosomal RNA. This Prochlorococcus marinus subsp. pastoris (strain CCMP1986 / NIES-2087 / MED4) protein is Small ribosomal subunit protein uS19.